The sequence spans 640 residues: Threonine--tRNA ligase (640 aa).

The TGS domain occupies 1–60; sequence MKITFPDGAVKEFEPGVSTADIAASISPGLKKKALAGKLNGELLDLVTPIHEDGAIEIVT. The interval 241 to 538 is catalytic; it reads DHRKLGKELD…LIEEYKGAFP (298 aa). Residues C334, H385, and H515 each contribute to the Zn(2+) site.

The protein belongs to the class-II aminoacyl-tRNA synthetase family. As to quaternary structure, homodimer. Zn(2+) serves as cofactor.

It localises to the cytoplasm. It carries out the reaction tRNA(Thr) + L-threonine + ATP = L-threonyl-tRNA(Thr) + AMP + diphosphate + H(+). Its function is as follows. Catalyzes the attachment of threonine to tRNA(Thr) in a two-step reaction: L-threonine is first activated by ATP to form Thr-AMP and then transferred to the acceptor end of tRNA(Thr). Also edits incorrectly charged L-seryl-tRNA(Thr). In Listeria monocytogenes serotype 4b (strain CLIP80459), this protein is Threonine--tRNA ligase.